A 331-amino-acid polypeptide reads, in one-letter code: Tetraacyldisaccharide 4'-kinase (331 aa).

An ATP-binding site is contributed by 60–67 (TVGGTGKT).

It belongs to the LpxK family.

The enzyme catalyses a lipid A disaccharide + ATP = a lipid IVA + ADP + H(+). It participates in glycolipid biosynthesis; lipid IV(A) biosynthesis; lipid IV(A) from (3R)-3-hydroxytetradecanoyl-[acyl-carrier-protein] and UDP-N-acetyl-alpha-D-glucosamine: step 6/6. Functionally, transfers the gamma-phosphate of ATP to the 4'-position of a tetraacyldisaccharide 1-phosphate intermediate (termed DS-1-P) to form tetraacyldisaccharide 1,4'-bis-phosphate (lipid IVA). This chain is Tetraacyldisaccharide 4'-kinase, found in Pseudomonas syringae pv. syringae (strain B728a).